Here is a 274-residue protein sequence, read N- to C-terminus: Putative pyruvate, phosphate dikinase regulatory protein (274 aa).

149 to 156 (GVSRSSKT) provides a ligand contact to ADP.

This sequence belongs to the pyruvate, phosphate/water dikinase regulatory protein family. PDRP subfamily.

The catalysed reaction is N(tele)-phospho-L-histidyl/L-threonyl-[pyruvate, phosphate dikinase] + ADP = N(tele)-phospho-L-histidyl/O-phospho-L-threonyl-[pyruvate, phosphate dikinase] + AMP + H(+). It catalyses the reaction N(tele)-phospho-L-histidyl/O-phospho-L-threonyl-[pyruvate, phosphate dikinase] + phosphate + H(+) = N(tele)-phospho-L-histidyl/L-threonyl-[pyruvate, phosphate dikinase] + diphosphate. Bifunctional serine/threonine kinase and phosphorylase involved in the regulation of the pyruvate, phosphate dikinase (PPDK) by catalyzing its phosphorylation/dephosphorylation. This Rhizorhabdus wittichii (strain DSM 6014 / CCUG 31198 / JCM 15750 / NBRC 105917 / EY 4224 / RW1) (Sphingomonas wittichii) protein is Putative pyruvate, phosphate dikinase regulatory protein.